A 169-amino-acid chain; its full sequence is Succinate dehydrogenase cytochrome b560 subunit, mitochondrial (169 aa).

Residues 1–29 (MAAFLLRHVSRHCLRAHLNAQLCIRNAAP) constitute a mitochondrion transit peptide. Over 30–62 (LGTTAKEEMERFWKKNTSSNRPLSPHLTIYKWS) the chain is Mitochondrial matrix. A helical membrane pass occupies residues 63-92 (LPMALSVCHRGSGIALSGGVSLFGLSALLL). Over 93–112 (PGNFESYLMFVKSLCLGPTL) the chain is Mitochondrial intermembrane. A helical membrane pass occupies residues 113-137 (IYSAKFVLVFPLMYHSLNGIRHLLW). A heme b-binding site is contributed by histidine 127. The Mitochondrial matrix segment spans residues 138 to 144 (DLGKGLA). A helical transmembrane segment spans residues 145-166 (IPQVWLSGVAVVVLAVLSSGGL). At 167 to 169 (AAL) the chain is on the mitochondrial intermembrane side.

The protein belongs to the cytochrome b560 family. Component of complex II composed of four subunits: the flavoprotein (FP) SDHA, iron-sulfur protein (IP) SDHB, and a cytochrome b560 composed of SDHC and SDHD. The cofactor is heme b.

It localises to the mitochondrion inner membrane. It participates in carbohydrate metabolism; tricarboxylic acid cycle. Membrane-anchoring subunit of succinate dehydrogenase (SDH) that is involved in complex II of the mitochondrial electron transport chain and is responsible for transferring electrons from succinate to ubiquinone (coenzyme Q). SDH also oxidizes malate to the non-canonical enol form of oxaloacetate, enol-oxaloacetate. Enol-oxaloacetate, which is a potent inhibitor of the succinate dehydrogenase activity, is further isomerized into keto-oxaloacetate. This is Succinate dehydrogenase cytochrome b560 subunit, mitochondrial (Sdhc) from Mus musculus (Mouse).